We begin with the raw amino-acid sequence, 435 residues long: D-inositol 3-phosphate glycosyltransferase (435 aa).

Residue H25 participates in 1D-myo-inositol 3-phosphate binding. UDP-N-acetyl-alpha-D-glucosamine-binding positions include 31-32 (QP) and G39. Residues 36 to 41 (DAGGMN), K94, Y127, T151, and R171 contribute to the 1D-myo-inositol 3-phosphate site. Residues R245 and K250 each coordinate UDP-N-acetyl-alpha-D-glucosamine. Mg(2+) is bound by residues Y320, R321, and A323. Residues E333 and E341 each coordinate UDP-N-acetyl-alpha-D-glucosamine. A Mg(2+)-binding site is contributed by T347.

This sequence belongs to the glycosyltransferase group 1 family. MshA subfamily. As to quaternary structure, homodimer.

It catalyses the reaction 1D-myo-inositol 3-phosphate + UDP-N-acetyl-alpha-D-glucosamine = 1D-myo-inositol 2-acetamido-2-deoxy-alpha-D-glucopyranoside 3-phosphate + UDP + H(+). Functionally, catalyzes the transfer of a N-acetyl-glucosamine moiety to 1D-myo-inositol 3-phosphate to produce 1D-myo-inositol 2-acetamido-2-deoxy-glucopyranoside 3-phosphate in the mycothiol biosynthesis pathway. The protein is D-inositol 3-phosphate glycosyltransferase of Streptosporangium roseum (strain ATCC 12428 / DSM 43021 / JCM 3005 / KCTC 9067 / NCIMB 10171 / NRRL 2505 / NI 9100).